The primary structure comprises 101 residues: Isochorismate pyruvate lyase (101 aa).

The Chorismate mutase domain maps to 4–94 (PEDCTGLADI…WYIAEQIKYW (91 aa)). Residues R14, R31, K42, and Q90 each contribute to the substrate site.

As to quaternary structure, dimer of dimers.

The catalysed reaction is isochorismate = salicylate + pyruvate. It carries out the reaction chorismate = prephenate. Its pathway is siderophore biosynthesis; salicylate biosynthesis. Its activity is regulated as follows. Inhibited by endo-oxabicyclic diacid resembling to the conformation of the transition state. Functionally, involved in the incorporation of salicylate into the siderophore pyochelin. Catalyzes the elimination of the enolpyruvyl side chain from isochorismate to yield salicylate and pyruvate via a rare pericyclic hydrogen transfer mechanism from C2 to C5. PchB also catalyzes the nonphysiological Claisen rearrangement of chorismate to prephenate in which the pyruvylenol tail is transferred from a C3 ether linkage to a C1-C9 linkage. The polypeptide is Isochorismate pyruvate lyase (Pseudomonas aeruginosa (strain ATCC 15692 / DSM 22644 / CIP 104116 / JCM 14847 / LMG 12228 / 1C / PRS 101 / PAO1)).